A 155-amino-acid polypeptide reads, in one-letter code: 6,7-dimethyl-8-ribityllumazine synthase (155 aa).

Residues F23, 57–59 (AFE), and 81–83 (AVI) contribute to the 5-amino-6-(D-ribitylamino)uracil site. 86–87 (ST) contacts (2S)-2-hydroxy-3-oxobutyl phosphate. Catalysis depends on H89, which acts as the Proton donor. 5-amino-6-(D-ribitylamino)uracil is bound at residue F114. R128 lines the (2S)-2-hydroxy-3-oxobutyl phosphate pocket.

This sequence belongs to the DMRL synthase family.

The enzyme catalyses (2S)-2-hydroxy-3-oxobutyl phosphate + 5-amino-6-(D-ribitylamino)uracil = 6,7-dimethyl-8-(1-D-ribityl)lumazine + phosphate + 2 H2O + H(+). It functions in the pathway cofactor biosynthesis; riboflavin biosynthesis; riboflavin from 2-hydroxy-3-oxobutyl phosphate and 5-amino-6-(D-ribitylamino)uracil: step 1/2. Functionally, catalyzes the formation of 6,7-dimethyl-8-ribityllumazine by condensation of 5-amino-6-(D-ribitylamino)uracil with 3,4-dihydroxy-2-butanone 4-phosphate. This is the penultimate step in the biosynthesis of riboflavin. The protein is 6,7-dimethyl-8-ribityllumazine synthase of Pelobacter propionicus (strain DSM 2379 / NBRC 103807 / OttBd1).